The following is a 248-amino-acid chain: Tryptophan synthase alpha chain (248 aa).

Active-site proton acceptor residues include Glu36 and Asp47.

This sequence belongs to the TrpA family. As to quaternary structure, tetramer of two alpha and two beta chains.

The catalysed reaction is (1S,2R)-1-C-(indol-3-yl)glycerol 3-phosphate + L-serine = D-glyceraldehyde 3-phosphate + L-tryptophan + H2O. It functions in the pathway amino-acid biosynthesis; L-tryptophan biosynthesis; L-tryptophan from chorismate: step 5/5. Its function is as follows. The alpha subunit is responsible for the aldol cleavage of indoleglycerol phosphate to indole and glyceraldehyde 3-phosphate. This chain is Tryptophan synthase alpha chain, found in Archaeoglobus fulgidus (strain ATCC 49558 / DSM 4304 / JCM 9628 / NBRC 100126 / VC-16).